The following is a 912-amino-acid chain: Phosphoenolpyruvate carboxylase (912 aa).

Active-site residues include H138 and K575.

It belongs to the PEPCase type 1 family. It depends on Mg(2+) as a cofactor.

It catalyses the reaction oxaloacetate + phosphate = phosphoenolpyruvate + hydrogencarbonate. Functionally, forms oxaloacetate, a four-carbon dicarboxylic acid source for the tricarboxylic acid cycle. The sequence is that of Phosphoenolpyruvate carboxylase from Lactobacillus acidophilus (strain ATCC 700396 / NCK56 / N2 / NCFM).